The primary structure comprises 150 residues: Protein adenylyltransferase MntA (150 aa).

Residues 32–46 (GSRATGNINANSDWD) carry the GSX(10)DXD motif motif. Active-site residues include aspartate 44 and aspartate 46. Positions 44, 46, and 86 each coordinate Mg(2+).

The protein belongs to the MntA antitoxin family. Forms a complex with HepT, probably MntA(1):HepT(2) in vivo; can only be purified when both 'Arg-102' and 'Tyr-109' (or 'His-107' and 'Tyr-109') of HepThave been mutated. The fully di-AMPylated HepT homodimer is not found in a complex with MntA. Mg(2+) is required as a cofactor.

The enzyme catalyses L-tyrosyl-[protein] + ATP = O-(5'-adenylyl)-L-tyrosyl-[protein] + diphosphate. The catalysed reaction is O-(5'-adenylyl)-L-tyrosyl-[protein] + ATP = O-[5'-(adenylyl-(5'-&gt;3')-adenylyl)]-L-tyrosyl-[protein] + diphosphate. Antitoxin component of a type VII toxin-antitoxin (TA) system. Upon cloning in E.coli neutralizes the effect of cognate toxin HepT. Neutralization is mostly due to di-AMPylation of toxin by this enzyme. Successively di-AMPylates HepT on 'Tyr-109'. In vitro will use ATP, dATP, GTP, dGTP, TTP or UTP to generate a mono-modified protein, but requires a purine nucleotide for the second modification reaction (ATP, dATP or GTP). In Aphanizomenon flos-aquae (strain 2012/KM1/D3), this protein is Protein adenylyltransferase MntA.